The chain runs to 60 residues: Large ribosomal subunit protein bL32A (60 aa).

Residues 1 to 19 are compositionally biased toward basic residues; the sequence is MAVPKRRMSRSNTRSRRSQ. Positions 1-21 are disordered; sequence MAVPKRRMSRSNTRSRRSQWK.

The protein belongs to the bacterial ribosomal protein bL32 family.

In Nocardia farcinica (strain IFM 10152), this protein is Large ribosomal subunit protein bL32A.